We begin with the raw amino-acid sequence, 91 residues long: Bombyxin B-1 homolog (91 aa).

The signal sequence occupies residues 1–19; that stretch reads MKVSMFVVIVLCMVAASSA. 3 disulfide bridges follow: Cys-27–Cys-78, Cys-39–Cys-91, and Cys-77–Cys-82. A propeptide spans 49-69 (c peptide like); it reads SGAQYARYGWQSPESREGARG.

This sequence belongs to the insulin family. Heterodimer of a B chain and an A chain linked by two disulfide bonds.

It is found in the secreted. Functionally, brain peptide responsible for activation of prothoracic glands to produce ecdysone in insects. This chain is Bombyxin B-1 homolog (SBXB1), found in Samia cynthia (Ailanthus silkmoth).